The sequence spans 363 residues: Putative F-box protein At4g22170 (363 aa).

An F-box domain is found at 7–58 (PNSWSDLPHDLLNLVFERLSFANFNRARSVCSSWYSASRQSVPKNQIHWLIL).

The sequence is that of Putative F-box protein At4g22170 from Arabidopsis thaliana (Mouse-ear cress).